Here is a 509-residue protein sequence, read N- to C-terminus: MDIRAAEISAILKDQIKNFGQEAEVSEVGQVLSVGDGIARVYGLDNVQAGEMVEFPGGIRGMALNLEADNVGVVIFGSDRDIKEGDTVKRTGAIVDVPVGPELLGRVVDALGNPIDGKGPINAKQRSRVDIKAPGIIPRKSVHEPMSTGLKAIDALIPVGRGQRELVIGDRQTGKTAIILDTILNQKAIHDNGPEGDKLYCVYVAIGQKRSTVAQFVKVLEERGALQYSIIVAATASDPAPMQYLAPFAGCAMGEYFRDNGKHALIGYDDLSKQAVAYRQMSLLLRRPPGREAYPGDVFYLHSRLLERAAKLNDDNGAGSLTALPVIETQGNDVSAFIPTNVISITDGQIFLETDLFYQGIRPAVNVGLSVSRVGSSAQIKAMKQVAGSIKGELAQYREMAAFAQFGSDLDAATQRLLNRGARLTELLKQPQFSPLKTEEQVAVIFAGVNGYLDKLPVNQVGKFEQGLLSYLRSEGKAVLDTIRTEKAISDDTKAKLKTAIDSFSKSFA.

169-176 (GDRQTGKT) lines the ATP pocket.

This sequence belongs to the ATPase alpha/beta chains family. As to quaternary structure, F-type ATPases have 2 components, CF(1) - the catalytic core - and CF(0) - the membrane proton channel. CF(1) has five subunits: alpha(3), beta(3), gamma(1), delta(1), epsilon(1). CF(0) has three main subunits: a(1), b(2) and c(9-12). The alpha and beta chains form an alternating ring which encloses part of the gamma chain. CF(1) is attached to CF(0) by a central stalk formed by the gamma and epsilon chains, while a peripheral stalk is formed by the delta and b chains.

Its subcellular location is the cell inner membrane. The catalysed reaction is ATP + H2O + 4 H(+)(in) = ADP + phosphate + 5 H(+)(out). In terms of biological role, produces ATP from ADP in the presence of a proton gradient across the membrane. The alpha chain is a regulatory subunit. This is ATP synthase subunit alpha from Sinorhizobium fredii (strain NBRC 101917 / NGR234).